The sequence spans 212 residues: Elongation factor Ts (212 aa).

The segment at 82–85 (SDFV) is involved in Mg(2+) ion dislocation from EF-Tu.

This sequence belongs to the EF-Ts family.

The protein localises to the cytoplasm. In terms of biological role, associates with the EF-Tu.GDP complex and induces the exchange of GDP to GTP. It remains bound to the aminoacyl-tRNA.EF-Tu.GTP complex up to the GTP hydrolysis stage on the ribosome. This is Elongation factor Ts from Solibacter usitatus (strain Ellin6076).